Reading from the N-terminus, the 255-residue chain is Testis-specific H1 histone (255 aa).

Positions 1 to 54 (MEQALTGEAQSRWPRRGGSGAMAEAPGPSGESRGHSATQLPAEKTVGGPSRGCS) are disordered. Ser56 carries the post-translational modification Phosphoserine. The segment covering 124-134 (KVPKPRRKPGR) has biased composition (basic residues). Positions 124-255 (KVPKPRRKPG…PKKPAQRTIQ (132 aa)) are disordered. Residues 142–152 (RAPWRTPAAPR) are compositionally biased toward low complexity. Composition is skewed to basic residues over residues 153–166 (SSRRRRQPLRKAAR) and 174–194 (RNARAKAKANARARRTRRARP). Composition is skewed to basic and acidic residues over residues 195–230 (RAKEPPCARAKEEAGATAADEGRGQAVKEDTTPRSG) and 238–248 (KPREEKQEPKK).

This sequence belongs to the histone H1/H5 family. As to expression, testis-specific.

The protein resides in the nucleus. Its subcellular location is the chromosome. In terms of biological role, essential for normal spermatogenesis and male fertility. Required for proper cell restructuring and DNA condensation during the elongation phase of spermiogenesis. Involved in the histone-protamine transition of sperm chromatin and the subsequent production of functional sperm. Binds both double-stranded and single-stranded DNA, ATP and protamine-1. The protein is Testis-specific H1 histone of Homo sapiens (Human).